The primary structure comprises 174 residues: Secretory-abundant heat soluble protein 68234 (174 aa).

A signal peptide spans 1-19 (MARFLVALALFGVVAMTAA). The interval 26-57 (EWSGKPWLGKFVAEVTDKSENWEAFVDALGLP) is SAHS-c1. The segment at 72 to 100 (YKQGDHYHHIFALPDKNFEKDIEFTLGQE) is SAHS-c2. The interval 113 to 162 (KYSEDGEKLVADVSIPTKGKTIRSEYEVQGDQLIKTYKTGDIVAKKWFKK) is SAHS-c3.

It belongs to the Secretory-abundant heat soluble protein (SAHS) family.

The protein localises to the secreted. In terms of biological role, secreted heat soluble protein acting as a molecular shield in water-deficient condition. Tardigrade-specific intrinsically disordered proteins (TDPs) are essential for desiccation tolerance by forming non-crystalline amorphous solids upon desiccation, and this vitrified state mirrors their protective capabilities. The sequence is that of Secretory-abundant heat soluble protein 68234 from Hypsibius exemplaris (Freshwater tardigrade).